Reading from the N-terminus, the 122-residue chain is LYR motif-containing protein 1 (122 aa).

It belongs to the complex I LYR family.

In terms of biological role, may promote cell proliferation and inhibition of apoptosis of preadipocytes. This is LYR motif-containing protein 1 (Lyrm1) from Rattus norvegicus (Rat).